The following is a 385-amino-acid chain: 1-deoxy-D-xylulose 5-phosphate reductoisomerase (385 aa).

NADPH is bound by residues threonine 10, glycine 11, serine 12, isoleucine 13, and asparagine 124. Lysine 125 contributes to the 1-deoxy-D-xylulose 5-phosphate binding site. Glutamate 126 is a binding site for NADPH. A Mn(2+)-binding site is contributed by aspartate 150. 1-deoxy-D-xylulose 5-phosphate-binding residues include serine 151, glutamate 152, serine 176, and histidine 199. Position 152 (glutamate 152) interacts with Mn(2+). Glycine 205 is an NADPH binding site. 1-deoxy-D-xylulose 5-phosphate is bound by residues serine 212, asparagine 217, lysine 218, and glutamate 221. A Mn(2+)-binding site is contributed by glutamate 221.

Belongs to the DXR family. Mg(2+) is required as a cofactor. Mn(2+) serves as cofactor.

The catalysed reaction is 2-C-methyl-D-erythritol 4-phosphate + NADP(+) = 1-deoxy-D-xylulose 5-phosphate + NADPH + H(+). It functions in the pathway isoprenoid biosynthesis; isopentenyl diphosphate biosynthesis via DXP pathway; isopentenyl diphosphate from 1-deoxy-D-xylulose 5-phosphate: step 1/6. In terms of biological role, catalyzes the NADPH-dependent rearrangement and reduction of 1-deoxy-D-xylulose-5-phosphate (DXP) to 2-C-methyl-D-erythritol 4-phosphate (MEP). The protein is 1-deoxy-D-xylulose 5-phosphate reductoisomerase of Clostridium botulinum (strain Eklund 17B / Type B).